Here is a 185-residue protein sequence, read N- to C-terminus: Peptidyl-tRNA hydrolase (185 aa).

Tyr14 contributes to the tRNA binding site. The Proton acceptor role is filled by His19. TRNA-binding residues include Phe64, Asn66, and Asn112.

It belongs to the PTH family. Monomer.

The protein resides in the cytoplasm. It catalyses the reaction an N-acyl-L-alpha-aminoacyl-tRNA + H2O = an N-acyl-L-amino acid + a tRNA + H(+). In terms of biological role, hydrolyzes ribosome-free peptidyl-tRNAs (with 1 or more amino acids incorporated), which drop off the ribosome during protein synthesis, or as a result of ribosome stalling. Functionally, catalyzes the release of premature peptidyl moieties from peptidyl-tRNA molecules trapped in stalled 50S ribosomal subunits, and thus maintains levels of free tRNAs and 50S ribosomes. The protein is Peptidyl-tRNA hydrolase of Lactobacillus johnsonii (strain CNCM I-12250 / La1 / NCC 533).